The sequence spans 87 residues: UPF0297 protein Sca_1229 (87 aa).

This sequence belongs to the UPF0297 family.

The chain is UPF0297 protein Sca_1229 from Staphylococcus carnosus (strain TM300).